We begin with the raw amino-acid sequence, 78 residues long: Exodeoxyribonuclease 7 small subunit (78 aa).

It belongs to the XseB family. As to quaternary structure, heterooligomer composed of large and small subunits.

It is found in the cytoplasm. The catalysed reaction is Exonucleolytic cleavage in either 5'- to 3'- or 3'- to 5'-direction to yield nucleoside 5'-phosphates.. Its function is as follows. Bidirectionally degrades single-stranded DNA into large acid-insoluble oligonucleotides, which are then degraded further into small acid-soluble oligonucleotides. The protein is Exodeoxyribonuclease 7 small subunit of Nocardia farcinica (strain IFM 10152).